Here is a 411-residue protein sequence, read N- to C-terminus: Tyrosine--tRNA ligase (411 aa).

Position 34 (Tyr34) interacts with L-tyrosine. Positions Cys39–Ser48 match the 'HIGH' region motif. The L-tyrosine site is built by Tyr171 and Gln175. A 'KMSKS' region motif is present at residues Lys231–Thr235. An ATP-binding site is contributed by Lys234. One can recognise an S4 RNA-binding domain in the interval Ile345–Val411.

It belongs to the class-I aminoacyl-tRNA synthetase family. TyrS type 1 subfamily. As to quaternary structure, homodimer.

Its subcellular location is the cytoplasm. The catalysed reaction is tRNA(Tyr) + L-tyrosine + ATP = L-tyrosyl-tRNA(Tyr) + AMP + diphosphate + H(+). Functionally, catalyzes the attachment of tyrosine to tRNA(Tyr) in a two-step reaction: tyrosine is first activated by ATP to form Tyr-AMP and then transferred to the acceptor end of tRNA(Tyr). This is Tyrosine--tRNA ligase from Rickettsia massiliae (strain Mtu5).